The following is a 150-amino-acid chain: Large-conductance mechanosensitive channel (150 aa).

2 helical membrane-spanning segments follow: residues 14-34 (VIDL…VTSF) and 81-101 (GVFL…FLVV).

It belongs to the MscL family. In terms of assembly, homopentamer.

The protein resides in the cell membrane. In terms of biological role, channel that opens in response to stretch forces in the membrane lipid bilayer. May participate in the regulation of osmotic pressure changes within the cell. The polypeptide is Large-conductance mechanosensitive channel (Syntrophomonas wolfei subsp. wolfei (strain DSM 2245B / Goettingen)).